A 549-amino-acid polypeptide reads, in one-letter code: Glucose-6-phosphate isomerase (549 aa).

Glutamate 355 functions as the Proton donor in the catalytic mechanism. Active-site residues include histidine 387 and lysine 515.

Belongs to the GPI family.

The protein resides in the cytoplasm. It carries out the reaction alpha-D-glucose 6-phosphate = beta-D-fructose 6-phosphate. Its pathway is carbohydrate biosynthesis; gluconeogenesis. It functions in the pathway carbohydrate degradation; glycolysis; D-glyceraldehyde 3-phosphate and glycerone phosphate from D-glucose: step 2/4. Its function is as follows. Catalyzes the reversible isomerization of glucose-6-phosphate to fructose-6-phosphate. This Pasteurella multocida (strain Pm70) protein is Glucose-6-phosphate isomerase.